We begin with the raw amino-acid sequence, 438 residues long: MLLSKYFLPVLKEEPSEAQITSHKLMLRSGMIRQQAAGIYTWLPLGLKILKNIENIVRSNMNKAGALEVLMPCIQPAHLWMESGRFENYGKEMLKFQDRHDNTLLFGPTNEDMITDIFRHNIKSYKDLPKNLYHIQWKFRDEIRPRFGVMRGREFLMKDAYSFDINEENAVKTYNQMFKTYINTFRDLGVFAIPVIADNGPIGGNLSNEFHIIAETGESTLYYDKRFKIFKDNPDIDVEEIKSWYAASEEKHDVNKLPISEQEITSSKGIEVGHIFYIGSKYSVNMNALINDEHGKLTPVEMSSYGIGISRLVAAIIEANCDEKGIIWPSSVAPFKVSLINLNIHDSKCTELAERAYKELSAQNIEVLYDDTDVRPGSKFATHDLIGSPYQIIIGPKKAANNIVEFKNRKSGVIEDIKIGNLKKLIMSCLRQQKSCNF.

Belongs to the class-II aminoacyl-tRNA synthetase family. ProS type 2 subfamily. As to quaternary structure, homodimer.

The protein resides in the cytoplasm. It catalyses the reaction tRNA(Pro) + L-proline + ATP = L-prolyl-tRNA(Pro) + AMP + diphosphate. In terms of biological role, catalyzes the attachment of proline to tRNA(Pro) in a two-step reaction: proline is first activated by ATP to form Pro-AMP and then transferred to the acceptor end of tRNA(Pro). The polypeptide is Proline--tRNA ligase (Rickettsia canadensis (strain McKiel)).